The following is a 254-amino-acid chain: MSDRYLEQRISIKFCVKLNKSASETHHLLKEAYGDEVMSRARVFDWHKRFKEGREDVRDDARSGRPVTHRTDDNIQKVKDLVCSNRQLTVRMMAEELNLDKETVRLILKENLNMRKISAKVISGVLKETEPHYVAQAGLELLVSRDPPTLASQSSGIISMSHHAKPKPGVQWCKFQSESTGRRARSADVQGQEKMDVTAQEARTNLPFYLFVLFRSSMNWMMSMHIREGCLFITRSTNSNANLFRKHPHRHTQK.

This Homo sapiens (Human) protein is Protein GVQW3.